A 177-amino-acid chain; its full sequence is NADH-quinone oxidoreductase subunit B (177 aa).

Residues Cys36, Cys37, Cys101, and Cys130 each coordinate [4Fe-4S] cluster.

Belongs to the complex I 20 kDa subunit family. NDH-1 is composed of 14 different subunits. Subunits NuoB, C, D, E, F, and G constitute the peripheral sector of the complex. [4Fe-4S] cluster serves as cofactor.

It localises to the cell inner membrane. It catalyses the reaction a quinone + NADH + 5 H(+)(in) = a quinol + NAD(+) + 4 H(+)(out). Functionally, NDH-1 shuttles electrons from NADH, via FMN and iron-sulfur (Fe-S) centers, to quinones in the respiratory chain. The immediate electron acceptor for the enzyme in this species is believed to be ubiquinone. Couples the redox reaction to proton translocation (for every two electrons transferred, four hydrogen ions are translocated across the cytoplasmic membrane), and thus conserves the redox energy in a proton gradient. The chain is NADH-quinone oxidoreductase subunit B from Hydrogenobaculum sp. (strain Y04AAS1).